The following is a 452-amino-acid chain: Phosphoglucosamine mutase (452 aa).

Catalysis depends on serine 108, which acts as the Phosphoserine intermediate. Serine 108, aspartate 247, aspartate 249, and aspartate 251 together coordinate Mg(2+). Position 108 is a phosphoserine (serine 108).

Belongs to the phosphohexose mutase family. It depends on Mg(2+) as a cofactor. In terms of processing, activated by phosphorylation.

It catalyses the reaction alpha-D-glucosamine 1-phosphate = D-glucosamine 6-phosphate. Its function is as follows. Catalyzes the conversion of glucosamine-6-phosphate to glucosamine-1-phosphate. In Burkholderia pseudomallei (strain 668), this protein is Phosphoglucosamine mutase.